A 296-amino-acid chain; its full sequence is D-alanine--D-alanine ligase (296 aa).

One can recognise an ATP-grasp domain in the interval 103–293; the sequence is KEILMHHRMP…FDSFVKRIIE (191 aa). 129–180 is a binding site for ATP; it reads ISFPVAVKPSSGGSSIATFKVKSIQELKHAYEEASKYGEVMIEQWVTGKEIT. Residues D247, E260, and N262 each contribute to the Mg(2+) site.

Belongs to the D-alanine--D-alanine ligase family. Mg(2+) is required as a cofactor. It depends on Mn(2+) as a cofactor.

The protein localises to the cytoplasm. The catalysed reaction is 2 D-alanine + ATP = D-alanyl-D-alanine + ADP + phosphate + H(+). Its pathway is cell wall biogenesis; peptidoglycan biosynthesis. Cell wall formation. This chain is D-alanine--D-alanine ligase, found in Francisella tularensis subsp. novicida (strain U112).